The following is a 277-amino-acid chain: Radial spoke head protein 9 homolog (277 aa).

This sequence belongs to the flagellar radial spoke RSP9 family. Component of axonemal radial spoke complexes.

It localises to the cytoplasm. The protein localises to the cytoskeleton. Its subcellular location is the cilium axoneme. The protein resides in the flagellum axoneme. It is found in the cell projection. It localises to the kinocilium. Its function is as follows. Functions as part of axonemal radial spoke complexes that play an important part in the motility of sperm and cilia. Required for motility of olfactory and neural cilia and for the structural integrity of ciliary axonemes in both 9+0 and 9+2 motile cilia. Essential for both the radial spoke head assembly and the central pair microtubule stability in ependymal motile cilia. The protein is Radial spoke head protein 9 homolog (rsph9) of Danio rerio (Zebrafish).